Here is a 326-residue protein sequence, read N- to C-terminus: Probable 9-O-acetyl-N-acetylneuraminic acid deacetylase (326 aa).

The first 21 residues, 1–21, serve as a signal peptide directing secretion; sequence MNAIISPDYYYVLTVAGQSNA.

The protein localises to the periplasm. In terms of biological role, probably catalyzes the hydrolysis of the 9-O-acetyl group of 9-O-acetyl-N-acetylneuraminate (Neu5,9Ac2). Is required for growth of E.coli on Neu5,9Ac2, an alternative sialic acid commonly found in mammalian host mucosal sites, in particular in the human intestine. This is Probable 9-O-acetyl-N-acetylneuraminic acid deacetylase (nanS) from Escherichia coli (strain K12).